Here is a 253-residue protein sequence, read N- to C-terminus: Imidazole glycerol phosphate synthase subunit HisF (253 aa).

Residues aspartate 11 and aspartate 130 contribute to the active site.

This sequence belongs to the HisA/HisF family. Heterodimer of HisH and HisF.

It localises to the cytoplasm. It catalyses the reaction 5-[(5-phospho-1-deoxy-D-ribulos-1-ylimino)methylamino]-1-(5-phospho-beta-D-ribosyl)imidazole-4-carboxamide + L-glutamine = D-erythro-1-(imidazol-4-yl)glycerol 3-phosphate + 5-amino-1-(5-phospho-beta-D-ribosyl)imidazole-4-carboxamide + L-glutamate + H(+). It participates in amino-acid biosynthesis; L-histidine biosynthesis; L-histidine from 5-phospho-alpha-D-ribose 1-diphosphate: step 5/9. In terms of biological role, IGPS catalyzes the conversion of PRFAR and glutamine to IGP, AICAR and glutamate. The HisF subunit catalyzes the cyclization activity that produces IGP and AICAR from PRFAR using the ammonia provided by the HisH subunit. The protein is Imidazole glycerol phosphate synthase subunit HisF of Acetivibrio thermocellus (strain ATCC 27405 / DSM 1237 / JCM 9322 / NBRC 103400 / NCIMB 10682 / NRRL B-4536 / VPI 7372) (Clostridium thermocellum).